The following is a 297-amino-acid chain: Glycine--tRNA ligase alpha subunit (297 aa).

This sequence belongs to the class-II aminoacyl-tRNA synthetase family. Tetramer of two alpha and two beta subunits.

Its subcellular location is the cytoplasm. The enzyme catalyses tRNA(Gly) + glycine + ATP = glycyl-tRNA(Gly) + AMP + diphosphate. The sequence is that of Glycine--tRNA ligase alpha subunit from Sulfurihydrogenibium sp. (strain YO3AOP1).